An 88-amino-acid polypeptide reads, in one-letter code: Small ribosomal subunit protein bS20 (88 aa).

Residues 1–23 (MPNTKSAEKALRVADANRQENRR) are compositionally biased toward basic and acidic residues. Positions 1–29 (MPNTKSAEKALRVADANRQENRRAKSQVK) are disordered.

Belongs to the bacterial ribosomal protein bS20 family.

Binds directly to 16S ribosomal RNA. This chain is Small ribosomal subunit protein bS20, found in Dehalococcoides mccartyi (strain ATCC BAA-2100 / JCM 16839 / KCTC 5957 / BAV1).